Consider the following 378-residue polypeptide: Chaperone protein DnaJ (378 aa).

Residues 5–70 (DYYEVLGVAK…QKRAAYDQYG (66 aa)) form the J domain. A CR-type zinc finger spans residues 138 to 216 (GYDTQIRVPS…CHGSGKVKET (79 aa)). Residues cysteine 151, cysteine 154, cysteine 168, cysteine 171, cysteine 190, cysteine 193, cysteine 204, and cysteine 207 each coordinate Zn(2+). CXXCXGXG motif repeat units lie at residues 151-158 (CEVCHGSG), 168-175 (CPTCHGQG), 190-197 (CPKCHGTG), and 204-211 (CAHCHGSG).

This sequence belongs to the DnaJ family. In terms of assembly, homodimer. It depends on Zn(2+) as a cofactor.

The protein localises to the cytoplasm. In terms of biological role, participates actively in the response to hyperosmotic and heat shock by preventing the aggregation of stress-denatured proteins and by disaggregating proteins, also in an autonomous, DnaK-independent fashion. Unfolded proteins bind initially to DnaJ; upon interaction with the DnaJ-bound protein, DnaK hydrolyzes its bound ATP, resulting in the formation of a stable complex. GrpE releases ADP from DnaK; ATP binding to DnaK triggers the release of the substrate protein, thus completing the reaction cycle. Several rounds of ATP-dependent interactions between DnaJ, DnaK and GrpE are required for fully efficient folding. Also involved, together with DnaK and GrpE, in the DNA replication of plasmids through activation of initiation proteins. In Burkholderia cenocepacia (strain HI2424), this protein is Chaperone protein DnaJ.